An 882-amino-acid chain; its full sequence is Translation initiation factor IF-2 (882 aa).

Disordered regions lie at residues 67-202 (KTVS…EKAR) and 223-278 (ERYG…KHMK). Composition is skewed to basic and acidic residues over residues 95–152 (VKRD…EAKA) and 161–202 (EQPK…EKAR). Residues 251 to 264 (GRRNRNKTQTKSKR) show a composition bias toward basic residues. The segment covering 265–274 (GGKDAREGRE) has biased composition (basic and acidic residues). The region spanning 382-551 (PRAPVVTIMG…LLQAEVLELK (170 aa)) is the tr-type G domain. Positions 391 to 398 (GHVDHGKT) are G1. 391–398 (GHVDHGKT) lines the GTP pocket. The G2 stretch occupies residues 416–420 (GITQH). The G3 stretch occupies residues 437-440 (DTPG). Residues 437-441 (DTPGH) and 491-494 (NKMD) contribute to the GTP site. The segment at 491 to 494 (NKMD) is G4. The G5 stretch occupies residues 527–529 (SAK).

It belongs to the TRAFAC class translation factor GTPase superfamily. Classic translation factor GTPase family. IF-2 subfamily.

It is found in the cytoplasm. Its function is as follows. One of the essential components for the initiation of protein synthesis. Protects formylmethionyl-tRNA from spontaneous hydrolysis and promotes its binding to the 30S ribosomal subunits. Also involved in the hydrolysis of GTP during the formation of the 70S ribosomal complex. This Shewanella amazonensis (strain ATCC BAA-1098 / SB2B) protein is Translation initiation factor IF-2.